We begin with the raw amino-acid sequence, 528 residues long: Bifunctional pantoate ligase/cytidylate kinase (528 aa).

Residues 1–293 are pantoate--beta-alanine ligase; it reads MRLFTTIAGL…IGSCRLIDNI (293 aa). An ATP-binding site is contributed by 34–41; it reads MGALHKGH. Histidine 41 (proton donor) is an active-site residue. Residue glutamine 65 participates in (R)-pantoate binding. Glutamine 65 contributes to the beta-alanine binding site. 160–163 lines the ATP pocket; sequence GQKD. Glutamine 166 is a (R)-pantoate binding site. ATP contacts are provided by residues isoleucine 189 and 197–200; that span reads ISSR. The cytidylate kinase stretch occupies residues 294–528; that stretch reads LLRNRKPIIA…YGKSSVNNII (235 aa).

It in the N-terminal section; belongs to the pantothenate synthetase family. In the C-terminal section; belongs to the cytidylate kinase family. Type 1 subfamily.

It localises to the cytoplasm. The enzyme catalyses (R)-pantoate + beta-alanine + ATP = (R)-pantothenate + AMP + diphosphate + H(+). It catalyses the reaction CMP + ATP = CDP + ADP. The catalysed reaction is dCMP + ATP = dCDP + ADP. It participates in cofactor biosynthesis; (R)-pantothenate biosynthesis; (R)-pantothenate from (R)-pantoate and beta-alanine: step 1/1. In terms of biological role, catalyzes the condensation of pantoate with beta-alanine in an ATP-dependent reaction via a pantoyl-adenylate intermediate. Functionally, catalyzes the transfer of a phosphate group from ATP to either CMP or dCMP to form CDP or dCDP and ADP, respectively. This Trichodesmium erythraeum (strain IMS101) protein is Bifunctional pantoate ligase/cytidylate kinase.